A 528-amino-acid chain; its full sequence is Ceramide glucosyltransferase (528 aa).

Topologically, residues 1–6 (MYSFIE) are lumenal. A helical transmembrane segment spans residues 7-27 (CIAGALFVLGCVVVTLVVIGV). Topologically, residues 28 to 369 (RALLYNFRNR…TVLSATILEP (342 aa)) are cytoplasmic. Residue Asp94 is a short sequence motif, D1. Residue Asp154 is a short sequence motif, D2. Position 308 (Asp308) is a short sequence motif, D3. Residue Asp308 is the Proton acceptor of the active site. The (Q/R)XXRW signature appears at 349–353 (RRSRW). Residues 370–390 (FTECFLFATYMSLAMTTIPVL) form a helical membrane-spanning segment. Over 391-402 (SQNLGIPKTWNA) the chain is Lumenal. A helical transmembrane segment spans residues 403–423 (TAIAWFTITTLWMLIDYIGYL). The Cytoplasmic segment spans residues 424–457 (RLHSGVTMEVDEHTPYFAKGFKNTGGIKRRPFLE). The helical transmembrane segment at 458–478 (FLAAWIGREGLAFPVWAYAVV) threads the bilayer. The Lumenal segment spans residues 479 to 528 (FGNTVNWRGRLFYIHWDTTVDAVEPREERTREVRTPELERGPSRNKHRVD). A disordered region spans residues 503–528 (PREERTREVRTPELERGPSRNKHRVD).

Belongs to the glycosyltransferase 2 family.

It localises to the golgi apparatus membrane. It carries out the reaction an N-acylsphing-4-enine + UDP-alpha-D-glucose = a beta-D-glucosyl-(1&lt;-&gt;1')-N-acylsphing-4-enine + UDP + H(+). The protein operates within lipid metabolism; sphingolipid metabolism. Catalyzes the final step in the biosynthesis of the membrane lipid glucosylceramide (GluCer), the transfer of glucose to ceramide. Glucosylceramides play important roles in growth, differentiation and pathogenicity. Contribution to fungal pathogenesis is host-dependent. This is Ceramide glucosyltransferase from Gibberella zeae (strain ATCC MYA-4620 / CBS 123657 / FGSC 9075 / NRRL 31084 / PH-1) (Wheat head blight fungus).